Here is a 432-residue protein sequence, read N- to C-terminus: Protein trichome birefringence-like 23 (432 aa).

The chain crosses the membrane as a helical; Signal-anchor for type II membrane protein span at residues 13–35 (QNTYLIKLVAATLITCLAFRFFV). Positions 153 to 155 (GDS) match the GDS motif motif. The DCXHWCLPGXXDXWN motif signature appears at 404–418 (DCLHWCLPGPIDHLN).

It belongs to the PC-esterase family. TBL subfamily.

It localises to the membrane. May act as a bridging protein that binds pectin and other cell wall polysaccharides. Probably involved in maintaining esterification of pectins. May be involved in the specific O-acetylation of cell wall polymers. In Arabidopsis thaliana (Mouse-ear cress), this protein is Protein trichome birefringence-like 23 (TBL23).